The following is a 285-amino-acid chain: ATP synthase gamma chain (285 aa).

Belongs to the ATPase gamma chain family. In terms of assembly, F-type ATPases have 2 components, CF(1) - the catalytic core - and CF(0) - the membrane proton channel. CF(1) has five subunits: alpha(3), beta(3), gamma(1), delta(1), epsilon(1). CF(0) has three main subunits: a, b and c.

It is found in the cell membrane. Its function is as follows. Produces ATP from ADP in the presence of a proton gradient across the membrane. The gamma chain is believed to be important in regulating ATPase activity and the flow of protons through the CF(0) complex. The polypeptide is ATP synthase gamma chain (Dehalococcoides mccartyi (strain CBDB1)).